A 751-amino-acid chain; its full sequence is Protein CLMP1 (751 aa).

Residues 1-11 (MGKSGGRKKKS) show a composition bias toward basic residues. The disordered stretch occupies residues 1 to 33 (MGKSGGRKKKSGGSNSNSSQVNSSETSGLSKPS). The span at 12–28 (GGSNSNSSQVNSSETSG) shows a compositional bias: low complexity. 3 TPR repeats span residues 51–84 (AHEL…IPKS), 89–124 (AVFH…QPGF), and 125–158 (TRAL…DPNH). In terms of domain architecture, PB1 spans 290–382 (WRPLKFVYDH…GMLRLHVVDV (93 aa)). The segment at 386 to 443 (QEPMLLEEEEEEVEEKPVIEEVISSPTESLSETEINTEKTDKEVEKEKASSSEDPETK) is disordered. Acidic residues predominate over residues 390 to 399 (LLEEEEEEVE). Over residues 409–419 (SSPTESLSETE) the composition is skewed to polar residues. Residues 421 to 443 (NTEKTDKEVEKEKASSSEDPETK) are compositionally biased toward basic and acidic residues. TPR repeat units lie at residues 434 to 468 (ASSS…DPDA), 481 to 514 (SEAL…AFFN), and 536 to 570 (EVVA…KPDF). Residues 630–648 (EQRMDDLKNPNSNKKEEVS) show a composition bias toward basic and acidic residues. The segment at 630 to 663 (EQRMDDLKNPNSNKKEEVSKRRKKQGGDGNEEVS) is disordered.

As to quaternary structure, interacts with myosin XI-K. Expressed in roots, stems, leaves, apex, flowers and seeds. Detected throughout the petiole in juvenile and young leaves, but restricted to the petiole midvein in older leaves. Expressed in hydathodes, at the base of the trichome, in the vascular cylinder of primary root and lateral root, in emerging lateral root primordia, in pollen and in developing embryos, but not in mature embryos.

It is found in the cytoplasm. In terms of biological role, required for plastid separation and partitioning during cell division. Not involved in plastid constriction or in the organization of cytoplasmic actin cables. Contributes to polar growth of root hairs. The sequence is that of Protein CLMP1 from Arabidopsis thaliana (Mouse-ear cress).